The following is a 67-amino-acid chain: Penaeidin-4d (67 aa).

An N-terminal signal peptide occupies residues 1–19; the sequence is MRLLVCLVFLASFAMVCQG. 3 cysteine pairs are disulfide-bonded: C42–C56, C45–C63, and C57–C64. L66 is modified (leucine amide).

Belongs to the penaeidin family.

Its subcellular location is the cytoplasmic granule. Antibacterial and antifungal activity. Presents chitin-binding activity. This Penaeus setiferus (Atlantic white shrimp) protein is Penaeidin-4d.